Consider the following 1263-residue polypeptide: Topoisomerase 1-associated factor 1 (1263 aa).

2 disordered regions span residues 1042–1098 (ERQL…DDSQ) and 1178–1263 (VEES…DEEE). The span at 1060-1071 (TKGKARKKSKEK) shows a compositional bias: basic residues. Residues 1179–1189 (EESDNDDEVEE) show a composition bias toward acidic residues. The segment covering 1211-1226 (VDTQQDLSDNTSNTSD) has biased composition (polar residues).

The protein belongs to the timeless family. As to quaternary structure, component of the fork protection complex (FPC) consisting of TOF1 and CSM3.

It localises to the nucleus. Forms a fork protection complex (FPC) with CSM3 and which is required for chromosome segregation during meiosis and DNA damage repair. FPC coordinates leading and lagging strand synthesis and moves with the replication fork. FPC stabilizes replication forks in a configuration that is recognized by replication checkpoint sensors. The chain is Topoisomerase 1-associated factor 1 (YBL053) from Candida albicans (strain SC5314 / ATCC MYA-2876) (Yeast).